The primary structure comprises 285 residues: GPN-loop GTPase 3 (285 aa).

13-18 (GSGKST) is a GTP binding site. The Gly-Pro-Asn (GPN)-loop; involved in dimer interface signature appears at 72 to 74 (GPN). 174–177 (TKMD) provides a ligand contact to GTP. Residues 261–285 (KEPKENEEDKSENFDEFFQDRADEP) form a disordered region. The span at 265-277 (ENEEDKSENFDEF) shows a compositional bias: acidic residues.

This sequence belongs to the GPN-loop GTPase family. In terms of assembly, heterodimer with gpn1. Binds to RNA polymerase II (RNAPII).

Its function is as follows. Small GTPase required for proper localization of RNA polymerase II (RNAPII). May act at an RNAP assembly step prior to nuclear import. The protein is GPN-loop GTPase 3 of Xenopus tropicalis (Western clawed frog).